We begin with the raw amino-acid sequence, 1268 residues long: Vigilin (1268 aa).

Ser2 carries the post-translational modification N-acetylserine. Position 8 is a phosphothreonine (Thr8). A phosphoserine mark is found at Ser11 and Ser31. KH domains follow at residues 150–212 (QASA…RHEV), 222–284 (RAVE…VARI), 295–357 (TTTI…LTEV), 364–424 (FTVS…QEQI), 435–497 (MDYV…KREL), 507–570 (ERTK…TKYM), and 581–643 (SYSI…RSRI). Phosphothreonine occurs at positions 295 and 296. A Phosphoserine modification is found at Ser317. Tyr437 carries the phosphotyrosine modification. Position 645 is a phosphoserine (Ser645). KH domains are found at residues 653-716 (IAEV…KKQL), 727-790 (SFTV…QKEL), 800-863 (VVED…KKRI), 873-967 (QVTV…KEAL), 972-1034 (PVTI…KAGL), 1052-1117 (SFKL…RDAI), and 1127-1190 (MVSE…IDHI). A disordered region spans residues 910–947 (PDREENPVHSVEPSIQENGDEAGEGREAKETDPGSPRR). A compositionally biased stretch (basic and acidic residues) spans 932-947 (GEGREAKETDPGSPRR). N6-acetyllysine is present on Lys991. Residues 1213–1268 (PPAHEESRAPSKGFVVRDAPWTSNSSEKAPDMSSSEEFPSFGAQVAPKTLPWGPKR) form a disordered region. A compositionally biased stretch (polar residues) spans 1233–1249 (WTSNSSEKAPDMSSSEE). Residues Ser1247 and Ser1252 each carry the phosphoserine modification.

It is found in the cytoplasm. The protein localises to the nucleus. Its function is as follows. Appears to play a role in cell sterol metabolism. It may function to protect cells from over-accumulation of cholesterol. This Mus musculus (Mouse) protein is Vigilin (Hdlbp).